Consider the following 606-residue polypeptide: Isocitrate dehydrogenase kinase/phosphatase (606 aa).

ATP is bound by residues 354–360 (APGFKGT) and K375. The active site involves D414.

The protein belongs to the AceK family.

Its subcellular location is the cytoplasm. It carries out the reaction L-seryl-[isocitrate dehydrogenase] + ATP = O-phospho-L-seryl-[isocitrate dehydrogenase] + ADP + H(+). Its function is as follows. Bifunctional enzyme which can phosphorylate or dephosphorylate isocitrate dehydrogenase (IDH) on a specific serine residue. This is a regulatory mechanism which enables bacteria to bypass the Krebs cycle via the glyoxylate shunt in response to the source of carbon. When bacteria are grown on glucose, IDH is fully active and unphosphorylated, but when grown on acetate or ethanol, the activity of IDH declines drastically concomitant with its phosphorylation. This Rhodopseudomonas palustris (strain BisB5) protein is Isocitrate dehydrogenase kinase/phosphatase.